The following is a 105-amino-acid chain: Vacuolar ATPase assembly integral membrane protein VMA21 homolog (105 aa).

The disordered stretch occupies residues 1–26 (MSTKNKKAAGGNGGAPKQTRQQSHDS). At 1–36 (MSTKNKKAAGGNGGAPKQTRQQSHDSQDYSSFKTVL) the chain is on the cytoplasmic side. Residues 37 to 57 (FYCMLIVFLPVLTFFVLKGFV) form a helical membrane-spanning segment. The Lumenal portion of the chain corresponds to 58–68 (LDQFLNISEVK). A helical membrane pass occupies residues 69-89 (VNIASAVGAVVALHIALGLYI). The Cytoplasmic portion of the chain corresponds to 90 to 105 (YRAYFGAPGSKGSKTD).

The protein belongs to the VMA21 family.

The protein resides in the endoplasmic reticulum membrane. Its subcellular location is the endoplasmic reticulum-Golgi intermediate compartment membrane. It localises to the cytoplasmic vesicle. The protein localises to the COPII-coated vesicle membrane. Required for the assembly of the V0 complex of the vacuolar ATPase (V-ATPase) in the endoplasmic reticulum. In Drosophila sechellia (Fruit fly), this protein is Vacuolar ATPase assembly integral membrane protein VMA21 homolog.